Consider the following 176-residue polypeptide: NAD(P)H-quinone oxidoreductase subunit 6, chloroplastic (176 aa).

The next 5 membrane-spanning stretches (helical) occupy residues 10-30 (ILLV…VLLT), 32-52 (PIYS…FHIP), 61-81 (AQLL…VMFM), 92-112 (LWTV…FSLI), and 152-172 (FYLP…GAIS).

This sequence belongs to the complex I subunit 6 family. NDH is composed of at least 16 different subunits, 5 of which are encoded in the nucleus.

The protein localises to the plastid. Its subcellular location is the chloroplast thylakoid membrane. The enzyme catalyses a plastoquinone + NADH + (n+1) H(+)(in) = a plastoquinol + NAD(+) + n H(+)(out). It carries out the reaction a plastoquinone + NADPH + (n+1) H(+)(in) = a plastoquinol + NADP(+) + n H(+)(out). NDH shuttles electrons from NAD(P)H:plastoquinone, via FMN and iron-sulfur (Fe-S) centers, to quinones in the photosynthetic chain and possibly in a chloroplast respiratory chain. The immediate electron acceptor for the enzyme in this species is believed to be plastoquinone. Couples the redox reaction to proton translocation, and thus conserves the redox energy in a proton gradient. The polypeptide is NAD(P)H-quinone oxidoreductase subunit 6, chloroplastic (ndhG) (Liriodendron tulipifera (Tuliptree)).